Consider the following 527-residue polypeptide: Sulfate adenylyltransferase (527 aa).

An N-terminal region spans residues 1-176 (MPIPTPHGGK…LQGINYPKHY (176 aa)). The catalytic stretch occupies residues 177–406 (DYVDARKTPT…LRETNPPRSK (230 aa)). Gln-206 contributes to the sulfate binding site. ATP contacts are provided by residues 206 to 209 (QTRN) and 302 to 305 (GRDH). Active-site residues include Thr-207, Arg-208, and Asn-209. Arg-208 serves as a coordination point for sulfate. Ala-306 serves as a coordination point for sulfate. Residue Val-344 participates in ATP binding. The segment at 407–527 (QGFAILIDNS…VNYLKDQGFY (121 aa)) is required for oligomerization; adenylyl-sulfate kinase-like.

Belongs to the sulfate adenylyltransferase family. In terms of assembly, homohexamer. Dimer of trimers.

The protein localises to the cytoplasm. The enzyme catalyses sulfate + ATP + H(+) = adenosine 5'-phosphosulfate + diphosphate. It functions in the pathway sulfur metabolism; hydrogen sulfide biosynthesis; sulfite from sulfate: step 1/3. Functionally, catalyzes the first intracellular reaction of sulfate assimilation, forming adenosine-5'-phosphosulfate (APS) from inorganic sulfate and ATP. Plays an important role in sulfate activation as a component of the biosynthesis pathway of sulfur-containing amino acids. The protein is Sulfate adenylyltransferase of Candida albicans (strain SC5314 / ATCC MYA-2876) (Yeast).